A 947-amino-acid polypeptide reads, in one-letter code: MVKDEFFLDHPGRKHRSRNTEKKKKPRRRERRMKQLVCIKSPWNRFKGIMLQLRLLLEVTINPNDNKLKPDSQGEKSRDGDSISKKGSRYVPSFLPPPLASKGKGPENKRDEERSKEMEKGKTRNIDHFVEELKREQEIRERRNQDRENSRDHNSDNTSSSRFDELPDYFDPSGRLGSLDDGDPQTTNLYVVNLSSKVDENFLLRTFGRFGPIASVKIMWPRTEEEKRRERHCGFVAFMNRADGEAAKEKMQGIIVYEYELKIGWGKVVFLPSQALPAPPPGHMAIRSKEGCNLIFSVTSGPPMNSVPNQNSELVLTPNVPDITVISPEDEHLKQIIDTMALNVLDGGCAFEQAIMERGRGNPLFNFLFELGSKEHTYYVWRLYSFAQGDTLQRWRTEPYIMIAGSGRWIPPPLPATRSPEHGKESRGTYAAGKSRCTEAEQTLTDSQRDEFEDMLRALTLERSQIREAMGFALDNAEAAGEVVEVLTESLTLKETSIPTKVARLMLVSDIIHNSSARVKNASAYRTKFEATLPDIMESFNDLYHSVHGRITAEALRERVLKVLQVWADWFLFSDAYINGLRATFLRSRNFGVTSFHSICGDAPDIEKKGLIGNMNDADKINQDAALAMGEGAARQELMNRPISELERRCRHNGLSLLGGREMMVARLVCLKDAEKQRGYEVVDENAKYRQGHSTWEEVNIEPKRMKTSYDKVETEEPVDLASTIPIPQPELKAFVKKEKIDLILPTSRWAREDDETDDEQKKSYSSGSDNAGGITFKTDEEDLKADPSVRVQPENEIDVEQRQKLRHIEIALIEYRESLEEQGMKNSEEIERKVAIHRKRLEADGLSGNQRVLPEKREKREDSRDSSRKRNRSESQNRSQSPPQKSLTRERVRDHDLDKDRHRDRDRQQHDLDKDRKRRAKSSSRERDDHDRSRERDRDWRRRGMR.

Over residues 1–11 (MVKDEFFLDHP) the composition is skewed to basic and acidic residues. Disordered regions lie at residues 1–35 (MVKD…RMKQ) and 63–167 (PNDN…DELP). Basic residues predominate over residues 12–34 (GRKHRSRNTEKKKKPRRRERRMK). 2 stretches are compositionally biased toward basic and acidic residues: residues 66-84 (NKLK…DSIS) and 104-155 (KGPE…DHNS). Positions 187 to 268 (TNLYVVNLSS…YELKIGWGKV (82 aa)) constitute an RRM domain. The stretch at 336–379 (IIDTMALNVLDGGCAFEQAIMERGRGNPLFNFLFELGSKEHTYY) is one SURP motif repeat. The disordered stretch occupies residues 412-434 (PPLPATRSPEHGKESRGTYAAGK). Residues 444 to 589 (LTDSQRDEFE…GLRATFLRSR (146 aa)) form the CID domain. An SAP domain is found at 638 to 672 (LMNRPISELERRCRHNGLSLLGGREMMVARLVCLK). Disordered stretches follow at residues 752–797 (REDD…PENE) and 846–947 (GLSG…RGMR). Basic and acidic residues-rich tracts occupy residues 854–876 (LPEK…RSES), 888–916 (LTRE…LDKD), and 924–947 (SSRE…RGMR).

In terms of tissue distribution, expressed in leaves, inflorescence stems, roots, flower buds, open flowers and siliques.

Probable SR-like splicing factor. In Arabidopsis thaliana (Mouse-ear cress), this protein is Protein RRC1-like.